The primary structure comprises 267 residues: Tryptophan synthase alpha chain (267 aa).

Catalysis depends on proton acceptor residues E49 and D60.

This sequence belongs to the TrpA family. Tetramer of two alpha and two beta chains.

The enzyme catalyses (1S,2R)-1-C-(indol-3-yl)glycerol 3-phosphate + L-serine = D-glyceraldehyde 3-phosphate + L-tryptophan + H2O. Its pathway is amino-acid biosynthesis; L-tryptophan biosynthesis; L-tryptophan from chorismate: step 5/5. In terms of biological role, the alpha subunit is responsible for the aldol cleavage of indoleglycerol phosphate to indole and glyceraldehyde 3-phosphate. The chain is Tryptophan synthase alpha chain from Geobacter sp. (strain M21).